The following is a 298-amino-acid chain: Probable GTP 3',8-cyclase (298 aa).

One can recognise a Radical SAM core domain in the interval 4 to 227 (RYGREIRSFR…MQNRKKYVID (224 aa)). Arg13 is a binding site for GTP. Cys20 and Cys24 together coordinate [4Fe-4S] cluster. Tyr26 is a binding site for S-adenosyl-L-methionine. Cys27 serves as a coordination point for [4Fe-4S] cluster. Residue Lys61 participates in GTP binding. Residue Gly65 coordinates S-adenosyl-L-methionine. Residue Thr91 coordinates GTP. Ser115 is an S-adenosyl-L-methionine binding site. Residue Lys152 coordinates GTP. Residues Cys243 and Cys246 each coordinate [4Fe-4S] cluster. 248–250 (RIR) is a GTP binding site. Cys260 contributes to the [4Fe-4S] cluster binding site.

Belongs to the radical SAM superfamily. MoaA family. It depends on [4Fe-4S] cluster as a cofactor.

The enzyme catalyses GTP + AH2 + S-adenosyl-L-methionine = (8S)-3',8-cyclo-7,8-dihydroguanosine 5'-triphosphate + 5'-deoxyadenosine + L-methionine + A + H(+). Its pathway is cofactor biosynthesis; molybdopterin biosynthesis. Functionally, catalyzes the cyclization of GTP to (8S)-3',8-cyclo-7,8-dihydroguanosine 5'-triphosphate. The sequence is that of Probable GTP 3',8-cyclase from Methanococcus maripaludis (strain C6 / ATCC BAA-1332).